The primary structure comprises 466 residues: Ribulose bisphosphate carboxylase large chain (466 aa).

N6,N6,N6-trimethyllysine is present on Lys-5. Residues Asn-114 and Thr-164 each contribute to the substrate site. Catalysis depends on Lys-166, which acts as the Proton acceptor. Residue Lys-168 coordinates substrate. Residues Lys-192, Asp-194, and Glu-195 each coordinate Mg(2+). Position 192 is an N6-carboxylysine (Lys-192). His-285 acts as the Proton acceptor in catalysis. Substrate contacts are provided by Arg-286, His-318, and Ser-370.

This sequence belongs to the RuBisCO large chain family. Type I subfamily. In terms of assembly, heterohexadecamer of 8 large chains and 8 small chains; disulfide-linked. The disulfide link is formed within the large subunit homodimers. The cofactor is Mg(2+). In terms of processing, the disulfide bond which can form in the large chain dimeric partners within the hexadecamer appears to be associated with oxidative stress and protein turnover.

It localises to the plastid. Its subcellular location is the chloroplast. The catalysed reaction is 2 (2R)-3-phosphoglycerate + 2 H(+) = D-ribulose 1,5-bisphosphate + CO2 + H2O. It catalyses the reaction D-ribulose 1,5-bisphosphate + O2 = 2-phosphoglycolate + (2R)-3-phosphoglycerate + 2 H(+). Its function is as follows. RuBisCO catalyzes two reactions: the carboxylation of D-ribulose 1,5-bisphosphate, the primary event in carbon dioxide fixation, as well as the oxidative fragmentation of the pentose substrate in the photorespiration process. Both reactions occur simultaneously and in competition at the same active site. This Drosophyllum lusitanicum (Portuguese sundew) protein is Ribulose bisphosphate carboxylase large chain.